We begin with the raw amino-acid sequence, 245 residues long: 4-hydroxy-tetrahydrodipicolinate reductase (245 aa).

Residues 7 to 12, 75 to 77, and 102 to 105 each bind NAD(+); these read GAKGKV, GTT, and APNF. His132 serves as the catalytic Proton donor/acceptor. His133 provides a ligand contact to (S)-2,3,4,5-tetrahydrodipicolinate. Residue Lys136 is the Proton donor of the active site. Residue 142–143 participates in (S)-2,3,4,5-tetrahydrodipicolinate binding; that stretch reads GT.

The protein belongs to the DapB family.

It is found in the cytoplasm. The catalysed reaction is (S)-2,3,4,5-tetrahydrodipicolinate + NAD(+) + H2O = (2S,4S)-4-hydroxy-2,3,4,5-tetrahydrodipicolinate + NADH + H(+). It catalyses the reaction (S)-2,3,4,5-tetrahydrodipicolinate + NADP(+) + H2O = (2S,4S)-4-hydroxy-2,3,4,5-tetrahydrodipicolinate + NADPH + H(+). The protein operates within amino-acid biosynthesis; L-lysine biosynthesis via DAP pathway; (S)-tetrahydrodipicolinate from L-aspartate: step 4/4. Catalyzes the conversion of 4-hydroxy-tetrahydrodipicolinate (HTPA) to tetrahydrodipicolinate. This chain is 4-hydroxy-tetrahydrodipicolinate reductase, found in Mycobacterium sp. (strain JLS).